The sequence spans 142 residues: HTH-type transcriptional regulator MntR (142 aa).

The region spanning 1-63 is the HTH dtxR-type domain; sequence MPTPSMEDYI…YEKYRGLILT (63 aa). Mn(2+) is bound by residues D8, E11, H77, E99, E102, and H103.

It belongs to the DtxR/MntR family. As to quaternary structure, homodimer.

The protein localises to the cytoplasm. DNA binding is strongly activated by Mn(2+). Functionally, central regulator of manganese homeostasis. This Listeria welshimeri serovar 6b (strain ATCC 35897 / DSM 20650 / CCUG 15529 / CIP 8149 / NCTC 11857 / SLCC 5334 / V8) protein is HTH-type transcriptional regulator MntR.